Here is a 243-residue protein sequence, read N- to C-terminus: Ribonuclease 3 (243 aa).

One can recognise an RNase III domain in the interval 19–144; it reads FNTLHKLLGF…LVGAIYLDRG (126 aa). Residue Glu61 coordinates Mg(2+). Residue Asp65 is part of the active site. Mg(2+) contacts are provided by Asn130 and Glu133. Glu133 is a catalytic residue. Positions 172–240 constitute a DRBM domain; that stretch reads SYKSLLIEWC…SKRAYYALQN (69 aa).

It belongs to the ribonuclease III family. As to quaternary structure, homodimer. Mg(2+) serves as cofactor.

The protein resides in the cytoplasm. The enzyme catalyses Endonucleolytic cleavage to 5'-phosphomonoester.. In terms of biological role, digests double-stranded RNA. Involved in the processing of primary rRNA transcript to yield the immediate precursors to the large and small rRNAs (23S and 16S). Processes some mRNAs, and tRNAs when they are encoded in the rRNA operon. Processes pre-crRNA and tracrRNA of type II CRISPR loci if present in the organism. The polypeptide is Ribonuclease 3 (rnc) (Zunongwangia profunda (strain DSM 18752 / CCTCC AB 206139 / SM-A87) (Wangia profunda)).